Reading from the N-terminus, the 224-residue chain is Phosphoglycolate phosphatase (224 aa).

The active-site Nucleophile is Asp11. Asp11, Asp13, and Asp177 together coordinate Mg(2+).

Belongs to the HAD-like hydrolase superfamily. CbbY/CbbZ/Gph/YieH family. Mg(2+) serves as cofactor.

It carries out the reaction 2-phosphoglycolate + H2O = glycolate + phosphate. It participates in organic acid metabolism; glycolate biosynthesis; glycolate from 2-phosphoglycolate: step 1/1. In terms of biological role, specifically catalyzes the dephosphorylation of 2-phosphoglycolate. Is involved in the dissimilation of the intracellular 2-phosphoglycolate formed during the DNA repair of 3'-phosphoglycolate ends, a major class of DNA lesions induced by oxidative stress. This Haemophilus influenzae (strain 86-028NP) protein is Phosphoglycolate phosphatase.